Reading from the N-terminus, the 396-residue chain is 8-amino-7-oxononanoate synthase (396 aa).

R21 contacts substrate. A pyridoxal 5'-phosphate-binding site is contributed by 112–113 (GY). H137 is a substrate binding site. The pyridoxal 5'-phosphate site is built by S183, H211, and T239. K242 bears the N6-(pyridoxal phosphate)lysine mark. Substrate is bound at residue T358.

This sequence belongs to the class-II pyridoxal-phosphate-dependent aminotransferase family. BioF subfamily. As to quaternary structure, homodimer. The cofactor is pyridoxal 5'-phosphate.

It catalyses the reaction 6-carboxyhexanoyl-[ACP] + L-alanine + H(+) = (8S)-8-amino-7-oxononanoate + holo-[ACP] + CO2. It functions in the pathway cofactor biosynthesis; biotin biosynthesis. Catalyzes the decarboxylative condensation of pimeloyl-[acyl-carrier protein] and L-alanine to produce 8-amino-7-oxononanoate (AON), [acyl-carrier protein], and carbon dioxide. This chain is 8-amino-7-oxononanoate synthase, found in Bordetella petrii (strain ATCC BAA-461 / DSM 12804 / CCUG 43448).